Consider the following 542-residue polypeptide: CTP synthase (542 aa).

An amidoligase domain region spans residues 1–265; the sequence is MARYVFITGG…DDEVLAAFGI (265 aa). Ser13 is a CTP binding site. Position 13 (Ser13) interacts with UTP. Residues 14–19 and Asp71 contribute to the ATP site; that span reads SLGKGI. Residues Asp71 and Glu139 each contribute to the Mg(2+) site. CTP-binding positions include 146-148, 186-191, and Lys222; these read DIE and KTKPTQ. Residues 186 to 191 and Lys222 contribute to the UTP site; that span reads KTKPTQ. The region spanning 291–541 is the Glutamine amidotransferase type-1 domain; that stretch reads TIAIVGKYTG…IEAATEQSRL (251 aa). Gly353 provides a ligand contact to L-glutamine. Cys380 serves as the catalytic Nucleophile; for glutamine hydrolysis. L-glutamine-binding positions include 381–384, Glu404, and Arg469; that span reads FGMQ. Catalysis depends on residues His514 and Glu516.

It belongs to the CTP synthase family. As to quaternary structure, homotetramer.

The catalysed reaction is UTP + L-glutamine + ATP + H2O = CTP + L-glutamate + ADP + phosphate + 2 H(+). The enzyme catalyses L-glutamine + H2O = L-glutamate + NH4(+). It carries out the reaction UTP + NH4(+) + ATP = CTP + ADP + phosphate + 2 H(+). The protein operates within pyrimidine metabolism; CTP biosynthesis via de novo pathway; CTP from UDP: step 2/2. Allosterically activated by GTP, when glutamine is the substrate; GTP has no effect on the reaction when ammonia is the substrate. The allosteric effector GTP functions by stabilizing the protein conformation that binds the tetrahedral intermediate(s) formed during glutamine hydrolysis. Inhibited by the product CTP, via allosteric rather than competitive inhibition. Functionally, catalyzes the ATP-dependent amination of UTP to CTP with either L-glutamine or ammonia as the source of nitrogen. Regulates intracellular CTP levels through interactions with the four ribonucleotide triphosphates. In Rhizobium leguminosarum bv. trifolii (strain WSM2304), this protein is CTP synthase.